The chain runs to 490 residues: UDP-N-acetylmuramate--L-alanine ligase (490 aa).

Gly130–Thr136 is a binding site for ATP.

The protein belongs to the MurCDEF family.

It is found in the cytoplasm. The catalysed reaction is UDP-N-acetyl-alpha-D-muramate + L-alanine + ATP = UDP-N-acetyl-alpha-D-muramoyl-L-alanine + ADP + phosphate + H(+). Its pathway is cell wall biogenesis; peptidoglycan biosynthesis. Its function is as follows. Cell wall formation. This chain is UDP-N-acetylmuramate--L-alanine ligase, found in Idiomarina loihiensis (strain ATCC BAA-735 / DSM 15497 / L2-TR).